We begin with the raw amino-acid sequence, 216 residues long: MAAKGLLVMDVDSTLIEEEVIDLLGEKAGMGDKISEITAAAMSGEIDFKESLRERVALLSGLPTTIFDDVYKEIHLTKGATGLIETLHAKGWKVGLVSGGFHEIVDKIARDLKIDYVFANRLSVENGHLTGKTHGTVVDKDFKVDRLKQWANENKLNLSEVIAVGDGANDIPMLNTAGIGIAFCAKPAVKAAVSYHIDKRNLLTVLEFVDKLADKE.

Aspartate 10 (nucleophile) is an active-site residue. Residues aspartate 10 and aspartate 12 each coordinate Mg(2+). Aspartate 12 acts as the Proton donor in catalysis. Substrate contacts are provided by residues glutamate 19, arginine 55, 98 to 99 (SG), and lysine 143. Aspartate 166 is a binding site for Mg(2+). Asparagine 169 serves as a coordination point for substrate.

It belongs to the HAD-like hydrolase superfamily. SerB family. Requires Mg(2+) as cofactor.

The catalysed reaction is O-phospho-L-serine + H2O = L-serine + phosphate. It catalyses the reaction O-phospho-D-serine + H2O = D-serine + phosphate. Its pathway is amino-acid biosynthesis; L-serine biosynthesis; L-serine from 3-phospho-D-glycerate: step 3/3. The protein is Phosphoserine phosphatase of Lactococcus lactis subsp. lactis (strain IL1403) (Streptococcus lactis).